A 338-amino-acid chain; its full sequence is Cilia- and flagella-associated protein 36 (338 aa).

The stretch at 142 to 179 (ISDLEQEEMKLVSEALRLSKEEYEREQLRRSAKELNCT) forms a coiled coil. Disordered regions lie at residues 175–220 (ELNC…ESPY) and 281–314 (KKQESKKMAHNSEVHEEKATCSKQEMTEEEKKSL). A compositionally biased stretch (polar residues) spans 187-202 (KQSNGSERTPSNTELP). The stretch at 255–330 (NLSQAEKEQL…AEKLKEEVIL (76 aa)) forms a coiled coil.

It belongs to the CFAP36 family.

It is found in the nucleus. It localises to the cytoplasm. Its subcellular location is the cell projection. The protein localises to the cilium. The protein resides in the flagellum. The protein is Cilia- and flagella-associated protein 36 of Xenopus laevis (African clawed frog).